The primary structure comprises 364 residues: Phosrestin-2 (364 aa).

This sequence belongs to the arrestin family. Post-translationally, phosphorylated, but does not undergo light-induced phosphorylation. Expressed specifically and abundantly in photoreceptor cells in retina and ocelli.

It is found in the cell projection. The protein resides in the rhabdomere. Regulates photoreceptor cell deactivation. Arr1 and Arr2 proteins are mediators of rhodopsin inactivation and are essential for the termination of the phototransduction cascade. Involved in regulating normal cycles of per nuclear accumulation in brain circadian neurons and thus is important for normal circadian behavior. In the dark, functions with Arr2 to promote the formation of cytosolic Bdbt foci, which are required for dco localization to photoreceptor nuclei where it phosphorylates and activates degradation of per. The chain is Phosrestin-2 (Arr1) from Drosophila melanogaster (Fruit fly).